The following is an 80-amino-acid chain: MKSFLLIALVLFFLFVSYASAKNKCQLPSDVGKGKASFTRYYYNEEGGKCETFIYGGVGGNSNNFLTKEDCCRECAQGSC.

The N-terminal stretch at 1-21 is a signal peptide; the sequence is MKSFLLIALVLFFLFVSYASA. The BPTI/Kunitz inhibitor domain occupies 25-75; the sequence is CQLPSDVGKGKASFTRYYYNEEGGKCETFIYGGVGGNSNNFLTKEDCCREC. 3 cysteine pairs are disulfide-bonded: C25–C75, C50–C71, and C72–C80.

The protein belongs to the venom Kunitz-type family. Scorpion delta-Ktx subfamily. Delta-Ktx 2 sub-subfamily. As to expression, expressed by the venom gland.

It is found in the secreted. Its function is as follows. Serine protease inhibitor that inhibits trypsin at a molar ratio of 1:1 (Ki=160 nM). Is thermostable. The protein is Kunitz-type serine protease inhibitor LmKTT-1b of Lychas mucronatus (Chinese swimming scorpion).